The following is a 284-amino-acid chain: Bifunctional protein FolD (284 aa).

Residues Gly165–Ser167 and Ser190 contribute to the NADP(+) site.

Belongs to the tetrahydrofolate dehydrogenase/cyclohydrolase family. In terms of assembly, homodimer.

The catalysed reaction is (6R)-5,10-methylene-5,6,7,8-tetrahydrofolate + NADP(+) = (6R)-5,10-methenyltetrahydrofolate + NADPH. It catalyses the reaction (6R)-5,10-methenyltetrahydrofolate + H2O = (6R)-10-formyltetrahydrofolate + H(+). It participates in one-carbon metabolism; tetrahydrofolate interconversion. In terms of biological role, catalyzes the oxidation of 5,10-methylenetetrahydrofolate to 5,10-methenyltetrahydrofolate and then the hydrolysis of 5,10-methenyltetrahydrofolate to 10-formyltetrahydrofolate. This Streptococcus pyogenes serotype M28 (strain MGAS6180) protein is Bifunctional protein FolD.